The primary structure comprises 505 residues: MNLILDMIDISTPVILLNDTDARQIGVLEGDRVTITRIKTKHTIAAPVSITKTLTSQGTATISLGTNENLAAEKGDEIEIRAAPRPASIAFIRKKMDGGKFTREETATIISDMSSNVLSPSEITAYITAAYINGLDMDEVEFLTREMVASGEQITFSKKPVVDKHSIGGVPGNKITLLVVPVIAASGLLIPKTSSRAITGAGGTADLMEALAPVAFSAAEIKTMTEKAGGVIVWGGATNIAPADDMIVTYEYPLKIDARGQMLASIMAKKMAVGSDTCVIDIPIGPGTKIPDEAEGRVLANELITLGNRLGIRVECAVTFGGSPIGRNIGVNLEVSEALSLLEGKRGANSLVQKSVAIAGIALEMTGKTGADSGAEAAYDIIKKGKALKKMLDIIEIQGGDPKVKSTDFPVGEHTFVVPAASDGYVVSVKNQALISIARAAGSPVDHGAGLHLHKKPGEYVKRGEPLLTIYAERGWRLTRAIEEARTSYPVLVEGMLLERISSNR.

AMP is bound by residues Gly-169, 195–200 (SRAITG), and Thr-204. Asp-257 serves as the catalytic Proton donor. Positions 265 and 289 each coordinate AMP.

It belongs to the thymidine/pyrimidine-nucleoside phosphorylase family. Type 2 subfamily.

It carries out the reaction AMP + phosphate = alpha-D-ribose 1,5-bisphosphate + adenine. The enzyme catalyses CMP + phosphate = cytosine + alpha-D-ribose 1,5-bisphosphate. The catalysed reaction is UMP + phosphate = alpha-D-ribose 1,5-bisphosphate + uracil. Functionally, catalyzes the conversion of AMP and phosphate to adenine and ribose 1,5-bisphosphate (R15P). Exhibits phosphorylase activity toward CMP and UMP in addition to AMP. Functions in an archaeal AMP degradation pathway, together with R15P isomerase and RubisCO. The chain is AMP phosphorylase from Methanocorpusculum labreanum (strain ATCC 43576 / DSM 4855 / Z).